We begin with the raw amino-acid sequence, 209 residues long: Mitochondrial import inner membrane translocase subunit Tim23 (209 aa).

Helical transmembrane passes span 73–93, 125–145, and 180–200; these read FELA…FGAL, ALWA…GVIV, and GGLA…WEHI.

This sequence belongs to the Tim17/Tim22/Tim23 family. Component of the TIM23 complex at least composed of timm23, timm17 and timm50. The complex interacts with the timm44 component of the PAM complex.

The protein localises to the mitochondrion inner membrane. In terms of biological role, essential component of the TIM23 complex, a complex that mediates the translocation of transit peptide-containing proteins across the mitochondrial inner membrane. This Xenopus laevis (African clawed frog) protein is Mitochondrial import inner membrane translocase subunit Tim23 (timm23).